Here is a 149-residue protein sequence, read N- to C-terminus: Arginine regulator (149 aa).

This sequence belongs to the ArgR family.

It localises to the cytoplasm. It functions in the pathway amino-acid degradation; L-arginine degradation via ADI pathway. Its function is as follows. Regulates the transcription of the arc operon, involved in arginine catabolism. This Bacillus cereus (strain ATCC 14579 / DSM 31 / CCUG 7414 / JCM 2152 / NBRC 15305 / NCIMB 9373 / NCTC 2599 / NRRL B-3711) protein is Arginine regulator (argR1).